We begin with the raw amino-acid sequence, 777 residues long: Spastin (777 aa).

Composition is skewed to low complexity over residues 1–24, 51–76, and 85–94; these read MVRT…KSNN, HAHS…SSSP, and DDLTPTGSSP. Residues 1–103 form a disordered region; sequence MVRTKSSSSS…PRSCNGRGHS (103 aa). Topologically, residues 1–116 are cytoplasmic; sequence MVRTKSSSSS…KQNLYVVSFP (116 aa). A required for localization to punctate cytoplasmic foci region spans residues 1 to 215; that stretch reads MVRTKSSSSS…RALQPLEMAT (215 aa). An intramembrane region (helical) is located at residues 117–137; the sequence is IIFLFNVLRSLIYQLFCIFRY. Residues 138–777 are Cytoplasmic-facing; the sequence is LYGASTKVLY…WSQDYGDITI (640 aa). The sufficient for interaction with microtubules and microtubule severing stretch occupies residues 213–777; the sequence is MATNRPGGGY…WSQDYGDITI (565 aa). Residues 238-313 enclose the MIT domain; it reads HRRAFEYISK…SMARDRLHFL (76 aa). Positions 327 to 474 are disordered; it reads LKEKQPAPKQ…SSGSGASTPM (148 aa). Composition is skewed to polar residues over residues 372–389, 406–425, and 444–460; these read QNGT…TATG, PVTN…TTVG, and QFSS…RTPI. Residues 461–471 show a composition bias toward low complexity; that stretch reads NNNASSGSGAS. A required for interaction with microtubules region spans residues 462–474; sequence NNASSGSGASTPM. 542–549 lines the ATP pocket; the sequence is GPPGNGKT.

Belongs to the AAA ATPase family. Spastin subfamily. In terms of assembly, homohexamer. The homohexamer is stabilized by ATP-binding. The homohexamer may adopt a ring conformation through which microtubules pass prior to being severed. Interacts with microtubules. Interacts with atl; may be involved in microtubule dynamics.

The protein localises to the membrane. It is found in the cytoplasm. The protein resides in the cytoskeleton. It localises to the microtubule organizing center. Its subcellular location is the centrosome. The protein localises to the chromosome. It is found in the lipid droplet. It catalyses the reaction n ATP + n H2O + a microtubule = n ADP + n phosphate + (n+1) alpha/beta tubulin heterodimers.. Functionally, ATP-dependent microtubule severing protein. Stimulates microtubule minus-end depolymerization and poleward microtubule flux in the mitotic spindle. Regulates microtubule stability in the neuromuscular junction synapse. Involved in lipid metabolism by regulating the size and distribution of lipid droplets. Involved in axon regeneration by regulating microtubule severing. The chain is Spastin from Drosophila willistoni (Fruit fly).